Reading from the N-terminus, the 84-residue chain is Toxin To5 (84 aa).

A signal peptide spans 1 to 19 (MKAIIFFIGCLMLIDLVAG). The region spanning 21-82 (RSGYPVTQKG…IWGSYPNNCG (62 aa)) is the LCN-type CS-alpha/beta domain. 4 disulfide bridges follow: C31-C81, C35-C57, C43-C62, and C47-C64. C81 is subject to Cysteine amide.

Expressed by the venom gland.

Its subcellular location is the secreted. Its function is as follows. Beta toxins bind voltage-independently at site-4 of sodium channels (Nav) and shift the voltage of activation toward more negative potentials thereby affecting sodium channel activation and promoting spontaneous and repetitive firing. In Tityus obscurus (Amazonian scorpion), this protein is Toxin To5.